The following is an 849-amino-acid chain: Villin-1 (849 aa).

Gelsolin-like repeat units follow at residues 30 to 107 (IEKS…DKFL), 147 to 213 (RVTE…EDGK), 262 to 335 (VPVE…TVEF), 405 to 475 (QEQL…PEMF), and 527 to 566 (AIQV…DHNL). Positions 739–849 (ETPERSLRKS…AVATGTPRRR (111 aa)) are disordered. Low complexity-rich tracts occupy residues 747 to 782 (KSSS…SAST) and 791 to 823 (PAAL…STPS).

Belongs to the villin/gelsolin family. As to expression, expressed in roots, young leaves, and inflorescences, mostly in the vasculature of roots, leaves, and filaments of the anthers. Also detected in guard cells.

The protein resides in the cytoplasm. It is found in the cytoskeleton. In terms of biological role, ca(2+)-independent actin-binding protein. Binds actin microfilaments (MFs). Involved in actin filament bundling, severing and capping. Caps the barbed end of actin filaments and protects them from disassembly. Promotes VLN3-mediated MF severing. This Oryza sativa subsp. japonica (Rice) protein is Villin-1.